The chain runs to 693 residues: Glycine--tRNA ligase beta subunit (693 aa).

The protein belongs to the class-II aminoacyl-tRNA synthetase family. Tetramer of two alpha and two beta subunits.

It is found in the cytoplasm. It catalyses the reaction tRNA(Gly) + glycine + ATP = glycyl-tRNA(Gly) + AMP + diphosphate. The polypeptide is Glycine--tRNA ligase beta subunit (glyS) (Halalkalibacterium halodurans (strain ATCC BAA-125 / DSM 18197 / FERM 7344 / JCM 9153 / C-125) (Bacillus halodurans)).